The primary structure comprises 204 residues: Large ribosomal subunit protein bL25 (204 aa).

The protein belongs to the bacterial ribosomal protein bL25 family. CTC subfamily. In terms of assembly, part of the 50S ribosomal subunit; part of the 5S rRNA/L5/L18/L25 subcomplex. Contacts the 5S rRNA. Binds to the 5S rRNA independently of L5 and L18.

Functionally, this is one of the proteins that binds to the 5S RNA in the ribosome where it forms part of the central protuberance. The polypeptide is Large ribosomal subunit protein bL25 (Pseudoalteromonas translucida (strain TAC 125)).